A 103-amino-acid chain; its full sequence is uncharacterized protein (103 aa).

This is an uncharacterized protein from Methanocaldococcus jannaschii (strain ATCC 43067 / DSM 2661 / JAL-1 / JCM 10045 / NBRC 100440) (Methanococcus jannaschii).